The following is a 338-amino-acid chain: Anthranilate phosphoribosyltransferase (338 aa).

Residues Gly-78, 81–82 (GD), Ser-86, 88–91 (NIST), 106–114 (KHGNKSITS), and Ser-118 each bind 5-phospho-alpha-D-ribose 1-diphosphate. Position 78 (Gly-78) interacts with anthranilate. Ser-90 lines the Mg(2+) pocket. Asn-109 contacts anthranilate. Arg-163 contributes to the anthranilate binding site. Mg(2+)-binding residues include Asp-222 and Glu-223.

This sequence belongs to the anthranilate phosphoribosyltransferase family. Homodimer. Mg(2+) serves as cofactor.

It catalyses the reaction N-(5-phospho-beta-D-ribosyl)anthranilate + diphosphate = 5-phospho-alpha-D-ribose 1-diphosphate + anthranilate. Its pathway is amino-acid biosynthesis; L-tryptophan biosynthesis; L-tryptophan from chorismate: step 2/5. Functionally, catalyzes the transfer of the phosphoribosyl group of 5-phosphorylribose-1-pyrophosphate (PRPP) to anthranilate to yield N-(5'-phosphoribosyl)-anthranilate (PRA). In Staphylococcus carnosus (strain TM300), this protein is Anthranilate phosphoribosyltransferase.